The primary structure comprises 210 residues: Riboflavin kinase (210 aa).

The tract at residues 1–81 (MECKERRLIG…DLLRYFNIAS (81 aa)) is H-T-H motif-like. Residues 82 to 210 (IRLIGRVISG…GDIVEVEILL (129 aa)) are riboflavin kinase. 91–96 (GLGEGA) is a CDP binding site. Mg(2+) contacts are provided by T120 and N122. Residues T177 and E185 each contribute to the FMN site. 190 to 193 (VKLR) is a CDP binding site.

It belongs to the archaeal riboflavin kinase family. The cofactor is Mg(2+).

It carries out the reaction riboflavin + CTP = CDP + FMN + H(+). Its pathway is cofactor biosynthesis; FMN biosynthesis; FMN from riboflavin (CTP route): step 1/1. In terms of biological role, catalyzes the CTP-dependent phosphorylation of riboflavin (vitamin B2) to form flavin mononucleotide (FMN). The polypeptide is Riboflavin kinase (ribK) (Pyrobaculum aerophilum (strain ATCC 51768 / DSM 7523 / JCM 9630 / CIP 104966 / NBRC 100827 / IM2)).